The following is a 324-amino-acid chain: Beta-ketoacyl-[acyl-carrier-protein] synthase III (324 aa).

Catalysis depends on residues Cys-112 and His-249. The tract at residues 250 to 254 (QANRR) is ACP-binding. The active site involves Asn-279.

This sequence belongs to the thiolase-like superfamily. FabH family. Homodimer.

Its subcellular location is the cytoplasm. The enzyme catalyses malonyl-[ACP] + acetyl-CoA + H(+) = 3-oxobutanoyl-[ACP] + CO2 + CoA. It participates in lipid metabolism; fatty acid biosynthesis. Functionally, catalyzes the condensation reaction of fatty acid synthesis by the addition to an acyl acceptor of two carbons from malonyl-ACP. Catalyzes the first condensation reaction which initiates fatty acid synthesis and may therefore play a role in governing the total rate of fatty acid production. Possesses both acetoacetyl-ACP synthase and acetyl transacylase activities. Its substrate specificity determines the biosynthesis of branched-chain and/or straight-chain of fatty acids. The protein is Beta-ketoacyl-[acyl-carrier-protein] synthase III of Streptococcus pyogenes serotype M2 (strain MGAS10270).